A 280-amino-acid chain; its full sequence is Tryptophan 2,3-dioxygenase (280 aa).

Substrate is bound by residues 47–51 (FVVQH), Tyr109, and Arg113. His236 provides a ligand contact to heme. Thr250 contributes to the substrate binding site.

This sequence belongs to the tryptophan 2,3-dioxygenase family. As to quaternary structure, homotetramer. Requires heme as cofactor.

The catalysed reaction is L-tryptophan + O2 = N-formyl-L-kynurenine. The protein operates within amino-acid degradation; L-tryptophan degradation via kynurenine pathway; L-kynurenine from L-tryptophan: step 1/2. Heme-dependent dioxygenase that catalyzes the oxidative cleavage of the L-tryptophan (L-Trp) pyrrole ring and converts L-tryptophan to N-formyl-L-kynurenine. Catalyzes the oxidative cleavage of the indole moiety. This chain is Tryptophan 2,3-dioxygenase, found in Serratia proteamaculans (strain 568).